Consider the following 161-residue polypeptide: Allophycocyanin beta chain (161 aa).

Asparagine 71 is subject to N4-methylasparagine. Cysteine 81 lines the (2R,3E)-phycocyanobilin pocket.

It belongs to the phycobiliprotein family. In terms of assembly, heterodimer of an alpha and a beta chain. Contains one covalently linked phycocyanobilin chromophore.

The protein resides in the cellular thylakoid membrane. In terms of biological role, light-harvesting photosynthetic bile pigment-protein from the phycobiliprotein complex. Allophycocyanin has a maximum absorption at approximately 650 nanometers. The chain is Allophycocyanin beta chain (apcB) from Synechocystis sp. (strain PCC 6714) (Aphanocapsa sp. (strain PCC 6714)).